A 351-amino-acid chain; its full sequence is Tetraacyldisaccharide 4'-kinase (351 aa).

An ATP-binding site is contributed by 61–68; that stretch reads TAGGTGKT.

This sequence belongs to the LpxK family.

It carries out the reaction a lipid A disaccharide + ATP = a lipid IVA + ADP + H(+). It functions in the pathway glycolipid biosynthesis; lipid IV(A) biosynthesis; lipid IV(A) from (3R)-3-hydroxytetradecanoyl-[acyl-carrier-protein] and UDP-N-acetyl-alpha-D-glucosamine: step 6/6. In terms of biological role, transfers the gamma-phosphate of ATP to the 4'-position of a tetraacyldisaccharide 1-phosphate intermediate (termed DS-1-P) to form tetraacyldisaccharide 1,4'-bis-phosphate (lipid IVA). The sequence is that of Tetraacyldisaccharide 4'-kinase from Xanthomonas campestris pv. campestris (strain 8004).